The primary structure comprises 211 residues: Beta-crystallin B3 (211 aa).

Met1 bears the N-acetylmethionine mark. Ala2 is subject to N-acetylalanine; in Beta-crystallin B3, N-terminally processed. Residues 2–23 are N-terminal arm; sequence AEQHGAPEQAAAGKSHGGLGGS. 2 Beta/gamma crystallin 'Greek key' domains span residues 24-63 and 64-108; these read YKVT…QVES and GPWL…RPLH. The interval 109–113 is connecting peptide; that stretch reads IDGPD. Beta/gamma crystallin 'Greek key' domains follow at residues 114-155 and 156-198; these read HKLH…RVIN and GTWV…RRIR. A C-terminal arm region spans residues 200–211; the sequence is QKWHKRGCFLSS.

It belongs to the beta/gamma-crystallin family. As to quaternary structure, homo/heterodimer, or complexes of higher-order. The structure of beta-crystallin oligomers seems to be stabilized through interactions between the N-terminal arms.

In terms of biological role, crystallins are the dominant structural components of the vertebrate eye lens. The chain is Beta-crystallin B3 (Crybb3) from Mus musculus (Mouse).